Reading from the N-terminus, the 439-residue chain is Glutamate--tRNA ligase 2 (439 aa).

A 'HIGH' region motif is present at residues 6-16; it reads PSPTGDMHIGN. Residues 232-236 carry the 'KMSKS' region motif; it reads KMSKR. Residue K235 participates in ATP binding.

It belongs to the class-I aminoacyl-tRNA synthetase family. Glutamate--tRNA ligase type 1 subfamily. In terms of assembly, monomer.

It is found in the cytoplasm. The catalysed reaction is tRNA(Glu) + L-glutamate + ATP = L-glutamyl-tRNA(Glu) + AMP + diphosphate. Its function is as follows. Catalyzes the attachment of glutamate to tRNA(Glu) in a two-step reaction: glutamate is first activated by ATP to form Glu-AMP and then transferred to the acceptor end of tRNA(Glu). In Helicobacter pylori (strain HPAG1), this protein is Glutamate--tRNA ligase 2.